A 158-amino-acid chain; its full sequence is Glutamyl-tRNA(Gln) amidotransferase subunit C, mitochondrial (158 aa).

This sequence belongs to the GatC family. Subunit of the heterotrimeric GatCAB amidotransferase (AdT) complex, composed of A, B and C subunits.

It localises to the mitochondrion. The enzyme catalyses L-glutamyl-tRNA(Gln) + L-glutamine + ATP + H2O = L-glutaminyl-tRNA(Gln) + L-glutamate + ADP + phosphate + H(+). Its function is as follows. Allows the formation of correctly charged Gln-tRNA(Gln) through the transamidation of misacylated Glu-tRNA(Gln) in the mitochondria. The reaction takes place in the presence of glutamine and ATP through an activated gamma-phospho-Glu-tRNA(Gln). The chain is Glutamyl-tRNA(Gln) amidotransferase subunit C, mitochondrial from Drosophila grimshawi (Hawaiian fruit fly).